The chain runs to 918 residues: Isoleucine--tRNA ligase (918 aa).

A 'HIGH' region motif is present at residues 57-67 (PYANGHIHIGT). Residue E552 coordinates L-isoleucyl-5'-AMP. Positions 593–597 (KMSKS) match the 'KMSKS' region motif. Position 596 (K596) interacts with ATP. Zn(2+) contacts are provided by C886, C889, C906, and C909.

Belongs to the class-I aminoacyl-tRNA synthetase family. IleS type 1 subfamily. In terms of assembly, monomer. Zn(2+) serves as cofactor.

The protein localises to the cytoplasm. It catalyses the reaction tRNA(Ile) + L-isoleucine + ATP = L-isoleucyl-tRNA(Ile) + AMP + diphosphate. In terms of biological role, catalyzes the attachment of isoleucine to tRNA(Ile). As IleRS can inadvertently accommodate and process structurally similar amino acids such as valine, to avoid such errors it has two additional distinct tRNA(Ile)-dependent editing activities. One activity is designated as 'pretransfer' editing and involves the hydrolysis of activated Val-AMP. The other activity is designated 'posttransfer' editing and involves deacylation of mischarged Val-tRNA(Ile). This chain is Isoleucine--tRNA ligase, found in Thermotoga neapolitana (strain ATCC 49049 / DSM 4359 / NBRC 107923 / NS-E).